The following is a 471-amino-acid chain: COP9 signalosome complex subunit 1 (471 aa).

Residues 249 to 411 (CFLLASFDHC…KILYARDVDQ (163 aa)) form the PCI domain. A disordered region spans residues 445-471 (HVKSPPREGSQGELTPANSQSRMSTNM). Ser448 and Ser454 each carry phosphoserine. Residues 456-471 (GELTPANSQSRMSTNM) are compositionally biased toward polar residues. Thr459 carries the phosphothreonine modification. The residue at position 463 (Ser463) is a Phosphoserine.

This sequence belongs to the CSN1 family. As to quaternary structure, component of the CSN complex, composed of COPS1/GPS1, COPS2, COPS3, COPS4, COPS5, COPS6, COPS7 (COPS7A or COPS7B), COPS8 and COPS9. In the complex, it probably interacts directly with COPS2, COPS3, COPS4 and COPS5. Interacts directly with inositol kinase ITPK1. Interacts with CAPN8. Interacts with USP48. Interacts with ASB4; this interaction negatively regulates GPS1. Expressed in the base region of the oxyntic and pyloric mucosae.

The protein resides in the cytoplasm. The protein localises to the nucleus. In terms of biological role, essential component of the COP9 signalosome complex (CSN), a complex involved in various cellular and developmental processes. The CSN complex is an essential regulator of the ubiquitin (Ubl) conjugation pathway by mediating the deneddylation of the cullin subunits of SCF-type E3 ligase complexes, leading to decrease the Ubl ligase activity of SCF-type complexes such as SCF, CSA or DDB2. The complex is also involved in phosphorylation of p53/TP53, c-jun/JUN, IkappaBalpha/NFKBIA, ITPK1 and IRF8/ICSBP, possibly via its association with CK2 and PKD kinases. CSN-dependent phosphorylation of TP53 and JUN promotes and protects degradation by the Ubl system, respectively. Suppresses G-protein- and mitogen-activated protein kinase-mediated signal transduction. The polypeptide is COP9 signalosome complex subunit 1 (Gps1) (Mus musculus (Mouse)).